A 31-amino-acid chain; its full sequence is Cyclotide vico-B (31 aa).

Positions 1–31 (GSIPCAESCVYIPCITGIAGCSCKNKVCYYN) form a cross-link, cyclopeptide (Gly-Asn). Intrachain disulfides connect Cys5/Cys21, Cys9/Cys23, and Cys14/Cys28.

The protein belongs to the cyclotide family. Bracelet subfamily. This is a cyclic peptide.

Probably participates in a plant defense mechanism. The sequence is that of Cyclotide vico-B from Viola cotyledon (Violeta).